Reading from the N-terminus, the 912-residue chain is Microtubule-associated protein 10 (912 aa).

Disordered regions lie at residues 31–50 (VAEE…RPSR), 209–239 (KSVE…ADKP), 254–296 (GRAF…QEGT), 335–366 (ASEE…SATG), 443–469 (SPES…NEKS), and 730–859 (RACD…VSSY). The span at 211–229 (VEVSPQTWQENQQLQQPDS) shows a compositional bias: polar residues. Residues 254–263 (GRAFHSKADS) show a composition bias toward basic and acidic residues. The segment covering 266–295 (TDSMENGKTNSDMCSKGSSERSVSPPNQEG) has biased composition (polar residues). Positions 347–362 (ENVNPPTHTNPPEHTN) are enriched in low complexity. Residues 452 to 468 (CKSESKKDKLSVGENEK) are compositionally biased toward basic and acidic residues. The span at 735–768 (SPGTENPKNSQHTSTSSETRLSIRKNSSAKSSIL) shows a compositional bias: polar residues. A compositionally biased stretch (low complexity) spans 796-807 (EASSSDFSSSQW). Residues 841 to 859 (GCKSSEKSQSPRTSQVSSY) show a composition bias toward polar residues.

As to quaternary structure, interacts (via middle region) with microtubules.

It localises to the cytoplasm. The protein localises to the cytoskeleton. Its subcellular location is the spindle pole. It is found in the microtubule organizing center. The protein resides in the centrosome. It localises to the midbody. Functionally, microtubule-associated protein (MAP) that plays a role in the regulation of cell division; promotes microtubule stability and participates in the organization of the spindle midzone and normal progress of cytokinesis. This is Microtubule-associated protein 10 (MAP10) from Bos taurus (Bovine).